Here is a 705-residue protein sequence, read N- to C-terminus: Ribosomal RNA large subunit methyltransferase K/L (705 aa).

In terms of domain architecture, THUMP spans 43-154 (VVYRCCLWSR…GEKGILGFDL (112 aa)).

Belongs to the methyltransferase superfamily. RlmKL family.

The protein resides in the cytoplasm. It carries out the reaction guanosine(2445) in 23S rRNA + S-adenosyl-L-methionine = N(2)-methylguanosine(2445) in 23S rRNA + S-adenosyl-L-homocysteine + H(+). It catalyses the reaction guanosine(2069) in 23S rRNA + S-adenosyl-L-methionine = N(2)-methylguanosine(2069) in 23S rRNA + S-adenosyl-L-homocysteine + H(+). Its function is as follows. Specifically methylates the guanine in position 2445 (m2G2445) and the guanine in position 2069 (m7G2069) of 23S rRNA. The polypeptide is Ribosomal RNA large subunit methyltransferase K/L (Aliivibrio salmonicida (strain LFI1238) (Vibrio salmonicida (strain LFI1238))).